We begin with the raw amino-acid sequence, 221 residues long: Adenylate kinase (221 aa).

10–15 contacts ATP; sequence GAGKGT. The tract at residues 30–59 is NMP; that stretch reads STGDMLRAAVKARTELGVAAKKIMDAGGLV. AMP contacts are provided by residues threonine 31, arginine 36, 57 to 59, 85 to 88, and glutamine 92; these read GLV and GFPR. The interval 122–159 is LID; sequence GRRVHLASGRTYHIKFNPPKVEGKDDITGDPLIQRDDD. ATP contacts are provided by residues arginine 123 and 132-133; that span reads TY. AMP-binding residues include arginine 156 and arginine 167. Serine 207 serves as a coordination point for ATP.

It belongs to the adenylate kinase family. As to quaternary structure, monomer.

It is found in the cytoplasm. The enzyme catalyses AMP + ATP = 2 ADP. It functions in the pathway purine metabolism; AMP biosynthesis via salvage pathway; AMP from ADP: step 1/1. In terms of biological role, catalyzes the reversible transfer of the terminal phosphate group between ATP and AMP. Plays an important role in cellular energy homeostasis and in adenine nucleotide metabolism. The chain is Adenylate kinase from Polynucleobacter necessarius subsp. necessarius (strain STIR1).